A 2655-amino-acid polypeptide reads, in one-letter code: Probable polyketide synthase 42 (2655 aa).

The region spanning 16 to 445 is the Ketosynthase family 3 (KS3) domain; the sequence is QNGVAVIGVG…GSNCCIILSE (430 aa). Catalysis depends on for beta-ketoacyl synthase activity residues C186, H325, and H368. Residues 634–667 form an acyl/malonyl transferase region; sequence GIKSDIMVGHSFGEIACSYCSGMVDFKTLCYLTY. The For acyl/malonyl transferase activity role is filled by S644. Residues 926 to 1059 are N-terminal hotdog fold; sequence HPTWKKANKN…ANYSLFKHND (134 aa). Positions 926–1234 constitute a PKS/mFAS DH domain; that stretch reads HPTWKKANKN…CKSSIPIIDS (309 aa). The active-site Proton acceptor; for dehydratase activity is the H970. Residues 1074–1234 form a C-terminal hotdog fold region; that stretch reads NYTIISKDEL…CKSSIPIIDS (161 aa). D1146 serves as the catalytic Proton donor; for dehydratase activity. The disordered stretch occupies residues 1700–1719; that stretch reads YNNNNNNNNNNNNNNNNNNN. Positions 2517–2594 constitute a Carrier domain; it reads NENNNIGDLL…TTIEIIIKGY (78 aa). Position 2554 is an O-(pantetheine 4'-phosphoryl)serine (S2554). Positions 2612 to 2655 are disordered; that stretch reads SVVQKETIKDNNENKDDIKIDMDDKKENLKGKKENIDDKKENNN. The span at 2617-2655 shows a compositional bias: basic and acidic residues; sequence ETIKDNNENKDDIKIDMDDKKENLKGKKENIDDKKENNN. A coiled-coil region spans residues 2618–2655; the sequence is TIKDNNENKDDIKIDMDDKKENLKGKKENIDDKKENNN.

Pantetheine 4'-phosphate is required as a cofactor.

Its function is as follows. Probable polyketide synthase. This chain is Probable polyketide synthase 42 (pks42), found in Dictyostelium discoideum (Social amoeba).